The primary structure comprises 211 residues: Endonuclease III (211 aa).

Positions 108 to 127 (REALEALAGVGRKTANVVLN) constitute a HhH domain. C187, C194, C197, and C203 together coordinate [4Fe-4S] cluster.

It belongs to the Nth/MutY family. Requires [4Fe-4S] cluster as cofactor.

It carries out the reaction 2'-deoxyribonucleotide-(2'-deoxyribose 5'-phosphate)-2'-deoxyribonucleotide-DNA = a 3'-end 2'-deoxyribonucleotide-(2,3-dehydro-2,3-deoxyribose 5'-phosphate)-DNA + a 5'-end 5'-phospho-2'-deoxyribonucleoside-DNA + H(+). Its function is as follows. DNA repair enzyme that has both DNA N-glycosylase activity and AP-lyase activity. The DNA N-glycosylase activity releases various damaged pyrimidines from DNA by cleaving the N-glycosidic bond, leaving an AP (apurinic/apyrimidinic) site. The AP-lyase activity cleaves the phosphodiester bond 3' to the AP site by a beta-elimination, leaving a 3'-terminal unsaturated sugar and a product with a terminal 5'-phosphate. This is Endonuclease III from Haemophilus influenzae (strain ATCC 51907 / DSM 11121 / KW20 / Rd).